The primary structure comprises 717 residues: Fatty acid oxidation complex subunit alpha (717 aa).

Positions Met1–Pro190 are enoyl-CoA hydratase. A 3-hydroxyacyl-CoA dehydrogenase region spans residues Arg306–Val717.

The protein in the N-terminal section; belongs to the enoyl-CoA hydratase/isomerase family. This sequence in the central section; belongs to the 3-hydroxyacyl-CoA dehydrogenase family. As to quaternary structure, heterotetramer of two alpha chains (FadJ) and two beta chains (FadI).

The protein resides in the cytoplasm. It catalyses the reaction a (3S)-3-hydroxyacyl-CoA = a (2E)-enoyl-CoA + H2O. It carries out the reaction a 4-saturated-(3S)-3-hydroxyacyl-CoA = a (3E)-enoyl-CoA + H2O. The enzyme catalyses a (3S)-3-hydroxyacyl-CoA + NAD(+) = a 3-oxoacyl-CoA + NADH + H(+). The catalysed reaction is (3S)-3-hydroxybutanoyl-CoA = (3R)-3-hydroxybutanoyl-CoA. The protein operates within lipid metabolism; fatty acid beta-oxidation. In terms of biological role, catalyzes the formation of a hydroxyacyl-CoA by addition of water on enoyl-CoA. Also exhibits 3-hydroxyacyl-CoA epimerase and 3-hydroxyacyl-CoA dehydrogenase activities. The chain is Fatty acid oxidation complex subunit alpha from Cronobacter sakazakii (strain ATCC BAA-894) (Enterobacter sakazakii).